Reading from the N-terminus, the 332-residue chain is NADH-quinone oxidoreductase subunit H (332 aa).

9 helical membrane-spanning segments follow: residues 4–24, 44–64, 78–98, 120–140, 165–185, 194–214, 255–275, 279–299, and 312–332; these read FAFF…IFAS, IGPD…MIKL, FIFA…LAAI, VALL…FLGG, VGAL…LVDI, FSWL…ALFI, IAGA…FWII, IMMI…RAAF, and YLIL…TVLL.

It belongs to the complex I subunit 1 family. In terms of assembly, NDH-1 is composed of 14 different subunits. Subunits NuoA, H, J, K, L, M, N constitute the membrane sector of the complex.

The protein resides in the cell inner membrane. It catalyses the reaction a quinone + NADH + 5 H(+)(in) = a quinol + NAD(+) + 4 H(+)(out). Its function is as follows. NDH-1 shuttles electrons from NADH, via FMN and iron-sulfur (Fe-S) centers, to quinones in the respiratory chain. The immediate electron acceptor for the enzyme in this species is believed to be ubiquinone. Couples the redox reaction to proton translocation (for every two electrons transferred, four hydrogen ions are translocated across the cytoplasmic membrane), and thus conserves the redox energy in a proton gradient. This subunit may bind ubiquinone. The protein is NADH-quinone oxidoreductase subunit H of Campylobacter jejuni subsp. jejuni serotype O:23/36 (strain 81-176).